The primary structure comprises 332 residues: Glycerol-3-phosphate dehydrogenase [NAD(P)+] (332 aa).

Residues Ser11, Phe12, Lys32, and Lys106 each coordinate NADPH. Residues Lys106, Gly137, and Ser139 each coordinate sn-glycerol 3-phosphate. An NADPH-binding site is contributed by Ala141. Sn-glycerol 3-phosphate is bound by residues Lys192, Asp245, Ser255, Arg256, and Asn257. Lys192 functions as the Proton acceptor in the catalytic mechanism. Residue Arg256 coordinates NADPH. The NADPH site is built by Val280 and Glu282.

The protein belongs to the NAD-dependent glycerol-3-phosphate dehydrogenase family.

Its subcellular location is the cytoplasm. The catalysed reaction is sn-glycerol 3-phosphate + NAD(+) = dihydroxyacetone phosphate + NADH + H(+). The enzyme catalyses sn-glycerol 3-phosphate + NADP(+) = dihydroxyacetone phosphate + NADPH + H(+). The protein operates within membrane lipid metabolism; glycerophospholipid metabolism. Functionally, catalyzes the reduction of the glycolytic intermediate dihydroxyacetone phosphate (DHAP) to sn-glycerol 3-phosphate (G3P), the key precursor for phospholipid synthesis. This Staphylococcus aureus (strain bovine RF122 / ET3-1) protein is Glycerol-3-phosphate dehydrogenase [NAD(P)+].